Here is a 510-residue protein sequence, read N- to C-terminus: Ribonuclease Y (510 aa).

A helical transmembrane segment spans residues 1-21; sequence MLIYILSGLGVLVGALLGYVV. Residues 200–260 form the KH domain; the sequence is TVSTIMLPND…LRREIAKRTI (61 aa). Residues 326–419 form the HD domain; that stretch reads VLNHSIEVAL…VAAADALSAA (94 aa).

This sequence belongs to the RNase Y family.

Its subcellular location is the cell membrane. Functionally, endoribonuclease that initiates mRNA decay. This is Ribonuclease Y from Thermosipho melanesiensis (strain DSM 12029 / CIP 104789 / BI429).